The following is a 154-amino-acid chain: Cell cycle regulator of non-homologous end joining (154 aa).

Met1 carries the post-translational modification N-acetylmethionine. The short motif at Met1–Val21 is the KBM element. Residues Glu77–Ala144 form a disordered region. A compositionally biased stretch (low complexity) spans Ala95 to Ser105. Residues Ala144–Ser154 carry the XLM motif.

In terms of assembly, interacts (via KBM motif) with XRCC5/Ku80 and XRCC6/Ku70 heterodimer. Interacts (via XLF motif) with TRIM28/KAP1, ATM, MRE11, NBN and RAD50. Interacts with splicing factor SF3B1. Interacts with ERCC6L2; this interaction is DNA independent.

Its subcellular location is the cytoplasm. The protein localises to the nucleus. It is found in the chromosome. In terms of biological role, cell-cycle-specific regulator of classical non-homologous end joining (NHEJ) of DNA double-strand break (DSB) repair, which can act both as an activator or inhibitor of NHEJ, depending on the cell cycle phase. Acts as a regulator of DNA repair pathway choice by specifically inhibiting classical NHEJ during the S and G2 phases, thereby promoting error-free repair by homologous recombination during cell cycle phases when sister chromatids are present. Preferentially protects single-stranded overhangs at break sites by inhibiting classical NHEJ, thereby creating a local environment that favors homologous recombination. Acts via interaction with XRCC5/Ku80 and XRCC6/Ku70. In contrast, acts as an activator of NHEJ during G1 phase of the cell cycle: promotes classical NHEJ in G1 phase cells via multivalent interactions that increase the affinity of DNA damage response proteins for DSB-associated chromatin. Also involved in immunoglobulin V(D)J recombination. May act as a regulator of proteasome. In case of infection by a retrovirus, may regulate the proteasome during the uncoating phase of retrovirus. This Cricetulus griseus (Chinese hamster) protein is Cell cycle regulator of non-homologous end joining.